Consider the following 289-residue polypeptide: uncharacterized protein (289 aa).

Over residues 1 to 20 (MNPMDRQTEGQEPQHQDRQP) the composition is skewed to basic and acidic residues. A disordered region spans residues 1–39 (MNPMDRQTEGQEPQHQDRQPGIESKMNPLPLSEDEDYRG). 49-73 (IITGGDSGIGRAAAIAFAKEGADIS) provides a ligand contact to NADP(+). Residue Ser-181 coordinates substrate. Tyr-194 acts as the Proton acceptor in catalysis.

This sequence belongs to the short-chain dehydrogenases/reductases (SDR) family.

This is an uncharacterized protein from Bacillus subtilis (strain 168).